The following is a 219-amino-acid chain: Octanoyltransferase (219 aa).

The 189-residue stretch at 24 to 212 folds into the BPL/LPL catalytic domain; it reads KFRRECILFL…NLNSFLGPIS (189 aa). Substrate is bound by residues 69-76, 140-142, and 153-155; these read RGGDFTAH, SIG, and GVA. Catalysis depends on Cys-171, which acts as the Acyl-thioester intermediate.

The protein belongs to the LipB family.

Its subcellular location is the cytoplasm. The enzyme catalyses octanoyl-[ACP] + L-lysyl-[protein] = N(6)-octanoyl-L-lysyl-[protein] + holo-[ACP] + H(+). It functions in the pathway protein modification; protein lipoylation via endogenous pathway; protein N(6)-(lipoyl)lysine from octanoyl-[acyl-carrier-protein]: step 1/2. Its function is as follows. Catalyzes the transfer of endogenously produced octanoic acid from octanoyl-acyl-carrier-protein onto the lipoyl domains of lipoate-dependent enzymes. Lipoyl-ACP can also act as a substrate although octanoyl-ACP is likely to be the physiological substrate. The chain is Octanoyltransferase from Leptospira borgpetersenii serovar Hardjo-bovis (strain JB197).